Reading from the N-terminus, the 203-residue chain is Urease accessory protein UreG (203 aa).

Residue 11–18 (GPVGSGKT) coordinates GTP.

Belongs to the SIMIBI class G3E GTPase family. UreG subfamily. In terms of assembly, homodimer. UreD, UreF and UreG form a complex that acts as a GTP-hydrolysis-dependent molecular chaperone, activating the urease apoprotein by helping to assemble the nickel containing metallocenter of UreC. The UreE protein probably delivers the nickel.

It is found in the cytoplasm. Facilitates the functional incorporation of the urease nickel metallocenter. This process requires GTP hydrolysis, probably effectuated by UreG. The sequence is that of Urease accessory protein UreG from Prochlorococcus marinus (strain MIT 9215).